Reading from the N-terminus, the 199-residue chain is Peptidyl-tRNA hydrolase (199 aa).

Tyr-18 is a binding site for tRNA. Catalysis depends on His-23, which acts as the Proton acceptor. TRNA-binding residues include Tyr-72, Asn-74, and Asn-120.

Belongs to the PTH family. As to quaternary structure, monomer.

It localises to the cytoplasm. The enzyme catalyses an N-acyl-L-alpha-aminoacyl-tRNA + H2O = an N-acyl-L-amino acid + a tRNA + H(+). Its function is as follows. Hydrolyzes ribosome-free peptidyl-tRNAs (with 1 or more amino acids incorporated), which drop off the ribosome during protein synthesis, or as a result of ribosome stalling. Catalyzes the release of premature peptidyl moieties from peptidyl-tRNA molecules trapped in stalled 50S ribosomal subunits, and thus maintains levels of free tRNAs and 50S ribosomes. In Bifidobacterium adolescentis (strain ATCC 15703 / DSM 20083 / NCTC 11814 / E194a), this protein is Peptidyl-tRNA hydrolase.